The primary structure comprises 201 residues: uncharacterized protein (201 aa).

Residues 53–74 (PKKNTAHKNSTTSTVASSGNTT) form a disordered region. Residues 59 to 74 (HKNSTTSTVASSGNTT) show a composition bias toward polar residues. A bHLH domain is found at 88 to 136 (AKRLSHKEVERRRREAISEGIKELANIVPGCEKNKGSILQRTAQYIRSL).

The protein localises to the nucleus. This is an uncharacterized protein from Schizosaccharomyces pombe (strain 972 / ATCC 24843) (Fission yeast).